Here is a 134-residue protein sequence, read N- to C-terminus: ATP synthase epsilon chain, chloroplastic (134 aa).

The protein belongs to the ATPase epsilon chain family. F-type ATPases have 2 components, CF(1) - the catalytic core - and CF(0) - the membrane proton channel. CF(1) has five subunits: alpha(3), beta(3), gamma(1), delta(1), epsilon(1). CF(0) has three main subunits: a, b and c.

The protein resides in the plastid. The protein localises to the chloroplast thylakoid membrane. In terms of biological role, produces ATP from ADP in the presence of a proton gradient across the membrane. The sequence is that of ATP synthase epsilon chain, chloroplastic from Nymphaea alba (White water-lily).